The sequence spans 350 residues: Biotin synthase (350 aa).

Residues Asn41–Arg268 form the Radical SAM core domain. [4Fe-4S] cluster-binding residues include Cys56, Cys60, and Cys63. [2Fe-2S] cluster is bound by residues Cys100, Cys131, Cys191, and Arg263.

It belongs to the radical SAM superfamily. Biotin synthase family. As to quaternary structure, homodimer. [4Fe-4S] cluster serves as cofactor. It depends on [2Fe-2S] cluster as a cofactor.

It catalyses the reaction (4R,5S)-dethiobiotin + (sulfur carrier)-SH + 2 reduced [2Fe-2S]-[ferredoxin] + 2 S-adenosyl-L-methionine = (sulfur carrier)-H + biotin + 2 5'-deoxyadenosine + 2 L-methionine + 2 oxidized [2Fe-2S]-[ferredoxin]. It participates in cofactor biosynthesis; biotin biosynthesis; biotin from 7,8-diaminononanoate: step 2/2. Catalyzes the conversion of dethiobiotin (DTB) to biotin by the insertion of a sulfur atom into dethiobiotin via a radical-based mechanism. This chain is Biotin synthase, found in Shewanella putrefaciens (strain CN-32 / ATCC BAA-453).